A 200-amino-acid polypeptide reads, in one-letter code: Recombination protein RecR (200 aa).

The C4-type zinc finger occupies 57–72 (CRLCRTLTEEELCPQC). Residues 80–175 (TLLCVVEGPT…VASRIAHGVP (96 aa)) enclose the Toprim domain.

The protein belongs to the RecR family.

Functionally, may play a role in DNA repair. It seems to be involved in an RecBC-independent recombinational process of DNA repair. It may act with RecF and RecO. The sequence is that of Recombination protein RecR from Pseudomonas syringae pv. tomato (strain ATCC BAA-871 / DC3000).